Reading from the N-terminus, the 39-residue chain is Cytochrome b559 subunit beta (39 aa).

A helical transmembrane segment spans residues 14 to 30 (WLAVHGLAVPTVSFLGS). A heme-binding site is contributed by H18.

Belongs to the PsbE/PsbF family. As to quaternary structure, heterodimer of an alpha subunit and a beta subunit. PSII is composed of 1 copy each of membrane proteins PsbA, PsbB, PsbC, PsbD, PsbE, PsbF, PsbH, PsbI, PsbJ, PsbK, PsbL, PsbM, PsbT, PsbX, PsbY, PsbZ, Psb30/Ycf12, at least 3 peripheral proteins of the oxygen-evolving complex and a large number of cofactors. It forms dimeric complexes. Requires heme b as cofactor.

Its subcellular location is the plastid. It localises to the chloroplast thylakoid membrane. Functionally, this b-type cytochrome is tightly associated with the reaction center of photosystem II (PSII). PSII is a light-driven water:plastoquinone oxidoreductase that uses light energy to abstract electrons from H(2)O, generating O(2) and a proton gradient subsequently used for ATP formation. It consists of a core antenna complex that captures photons, and an electron transfer chain that converts photonic excitation into a charge separation. This is Cytochrome b559 subunit beta from Muilla maritima (Sea muilla).